Consider the following 223-residue polypeptide: Phosphoribosylformylglycinamidine synthase subunit PurQ (223 aa).

The region spanning 4 to 223 (FAVVVFPGTN…FRSMVEWARK (220 aa)) is the Glutamine amidotransferase type-1 domain. Cys-85 acts as the Nucleophile in catalysis. Residues His-196 and Glu-198 contribute to the active site.

As to quaternary structure, part of the FGAM synthase complex composed of 1 PurL, 1 PurQ and 2 PurS subunits.

The protein localises to the cytoplasm. The catalysed reaction is N(2)-formyl-N(1)-(5-phospho-beta-D-ribosyl)glycinamide + L-glutamine + ATP + H2O = 2-formamido-N(1)-(5-O-phospho-beta-D-ribosyl)acetamidine + L-glutamate + ADP + phosphate + H(+). It carries out the reaction L-glutamine + H2O = L-glutamate + NH4(+). Its pathway is purine metabolism; IMP biosynthesis via de novo pathway; 5-amino-1-(5-phospho-D-ribosyl)imidazole from N(2)-formyl-N(1)-(5-phospho-D-ribosyl)glycinamide: step 1/2. Functionally, part of the phosphoribosylformylglycinamidine synthase complex involved in the purines biosynthetic pathway. Catalyzes the ATP-dependent conversion of formylglycinamide ribonucleotide (FGAR) and glutamine to yield formylglycinamidine ribonucleotide (FGAM) and glutamate. The FGAM synthase complex is composed of three subunits. PurQ produces an ammonia molecule by converting glutamine to glutamate. PurL transfers the ammonia molecule to FGAR to form FGAM in an ATP-dependent manner. PurS interacts with PurQ and PurL and is thought to assist in the transfer of the ammonia molecule from PurQ to PurL. The polypeptide is Phosphoribosylformylglycinamidine synthase subunit PurQ (Thermococcus kodakarensis (strain ATCC BAA-918 / JCM 12380 / KOD1) (Pyrococcus kodakaraensis (strain KOD1))).